The following is a 174-amino-acid chain: Gamma-crystallin E (174 aa).

Beta/gamma crystallin 'Greek key' domains lie at Gly-2–Ser-40 and Gly-41–Pro-83. The interval His-84 to Ser-87 is connecting peptide. 2 consecutive Beta/gamma crystallin 'Greek key' domains span residues His-88–Glu-128 and Gly-129–Met-171.

It belongs to the beta/gamma-crystallin family. Detected in the superior olivary complex and fibers of the ventral aoustic stria of the auditory hindbrain.

Its function is as follows. Crystallins are the dominant structural components of the vertebrate eye lens. The protein is Gamma-crystallin E (Cryge) of Rattus norvegicus (Rat).